A 641-amino-acid chain; its full sequence is Putative phagocytic receptor 1a (641 aa).

A signal peptide spans 1 to 23 (MKINKKQIVFFILFSIFLNHVNG). Residues 24 to 279 (IFYLPGMIPH…ESNDNSVHWF (256 aa)) are Extracellular-facing. Residues 280-300 (SILNSLMIVFILTVMVAMIII) traverse the membrane as a helical segment. Residues 301–349 (RTLKKDIRRYTSIDTSEDRDSQEETGWKMIHGDVFRPPSHPMLLSVCIG) are Cytoplasmic-facing. A helical transmembrane segment spans residues 350-370 (SGVQIFSMTLITMIFAVLGFL). The Extracellular portion of the chain corresponds to 371-374 (SPAN). A helical transmembrane segment spans residues 375-395 (IGGLATALIVLFVLSAMFAGY). Over 396–413 (FSTRVFTIFKGRNWKKNT) the chain is Cytoplasmic. The chain crosses the membrane as a helical span at residues 414–434 (IYTALSMPGIIFGIFFFVNMF). At 435–445 (LRGAKSSAAVP) the chain is on the extracellular side. A helical membrane pass occupies residues 446-466 (FGTFASIIAMWFGISVPLVFL). At 467-502 (GSYFASKKPVPEDPVRTNQIPRQVPDQIWYMNPYLS) the chain is on the cytoplasmic side. The chain crosses the membrane as a helical span at residues 503 to 523 (ILMGGILPFGAVFIELHFILT). Over 524 to 532 (SLWDNQFYY) the chain is Extracellular. Residues 533–553 (IFGFLFIVLMILIVTSAEISI) form a helical membrane-spanning segment. At 554 to 578 (VMCYFQLCAEDHHWWWRSFLTAGSS) the chain is on the cytoplasmic side. Residues 579–599 (SLYMFIYSVSFFRYLGITKFI) traverse the membrane as a helical segment. The Extracellular segment spans residues 600 to 608 (SSLLDFSYS). A helical membrane pass occupies residues 609–629 (FIMSLAFAALTGTIGFYSCYF). The Cytoplasmic segment spans residues 630–641 (LVRKIYSSIHIN).

Belongs to the nonaspanin (TM9SF) (TC 9.A.2) family.

Its subcellular location is the membrane. Involved in adhesion, phagocytosis of hydrophilic particles and intracellular killing of bacteria. Associates with proteins harboring glycine-rich transmembrane domains and ensures their efficient localization to the cell surface. This is Putative phagocytic receptor 1a (phg1a) from Dictyostelium discoideum (Social amoeba).